Consider the following 737-residue polypeptide: Propionyl-CoA carboxylase alpha chain, mitochondrial (737 aa).

The transit peptide at 1–61 (MAGLWVRTVA…QCLVVSRSLS (61 aa)) directs the protein to the mitochondrion. Residues 71 to 518 (TFDKILIANR…STKFLSDVYP (448 aa)) form the Biotin carboxylation domain. Lys-74 carries the post-translational modification N6-acetyllysine; alternate. Lys-74 bears the N6-succinyllysine; alternate mark. Residue Lys-128 is modified to N6-succinyllysine. An N6-acetyllysine; alternate modification is found at Lys-159. Lys-159 is subject to N6-succinyllysine; alternate. At Lys-163 the chain carries N6-acetyllysine. Lys-186 is an ATP binding site. Residues 190–387 (KLLAKRAKVN…LVQEMILVAK (198 aa)) enclose the ATP-grasp domain. Residue Lys-197 is modified to N6-succinyllysine. At Lys-209 the chain carries N6-acetyllysine; alternate. Lys-209 is subject to N6-succinyllysine; alternate. ATP is bound by residues 218–279 (AREI…PRHI), Glu-270, and Asn-305. Ser-261 is modified (phosphoserine). Lys-271 is modified (N6-succinyllysine). The residue at position 337 (Lys-337) is an N6-acetyllysine; alternate. N6-succinyllysine; alternate is present on Lys-337. Mg(2+) is bound by residues Glu-345, Glu-358, and Asn-360. Residues Glu-345, Glu-358, and Asn-360 each contribute to the Mn(2+) site. Arg-362 is a catalytic residue. N6-succinyllysine occurs at positions 394 and 416. Phe-418 contacts biotin. Lys-505 is modified (N6-acetyllysine). N6-succinyllysine occurs at positions 511, 522, 567, and 657. The Biotinyl-binding domain maps to 658–737 (FMLEKVPKDT…GEGDLLVELE (80 aa)). The residue at position 703 (Lys-703) is an N6-biotinyllysine; by HLCS.

The holoenzyme is a dodecamer composed of 6 PCCA/alpha subunits and 6 PCCB/beta subunits. Interacts (via the biotin carboxylation domain) with SIRT4. Interacts with SIRT3 and SIRT5. The cofactor is biotin. Mg(2+) serves as cofactor. Requires Mn(2+) as cofactor. Acetylated. Post-translationally, the biotin cofactor is covalently attached to the C-terminal biotinyl-binding domain and is required for the catalytic activity. Biotinylation is catalyzed by HLCS.

It is found in the mitochondrion matrix. It catalyses the reaction propanoyl-CoA + hydrogencarbonate + ATP = (S)-methylmalonyl-CoA + ADP + phosphate + H(+). It carries out the reaction butanoyl-CoA + hydrogencarbonate + ATP = (2S)-ethylmalonyl-CoA + ADP + phosphate + H(+). It functions in the pathway metabolic intermediate metabolism; propanoyl-CoA degradation; succinyl-CoA from propanoyl-CoA: step 1/3. This is one of the 2 subunits of the biotin-dependent propionyl-CoA carboxylase (PCC), a mitochondrial enzyme involved in the catabolism of odd chain fatty acids, branched-chain amino acids isoleucine, threonine, methionine, and valine and other metabolites. Propionyl-CoA carboxylase catalyzes the carboxylation of propionyl-CoA/propanoyl-CoA to D-methylmalonyl-CoA/(S)-methylmalonyl-CoA. Within the holoenzyme, the alpha subunit catalyzes the ATP-dependent carboxylation of the biotin carried by the biotin carboxyl carrier (BCC) domain, while the beta subunit then transfers the carboxyl group from carboxylated biotin to propionyl-CoA. Propionyl-CoA carboxylase also significantly acts on butyryl-CoA/butanoyl-CoA, which is converted to ethylmalonyl-CoA/(2S)-ethylmalonyl-CoA. Other alternative minor substrates include (2E)-butenoyl-CoA/crotonoyl-CoA. The chain is Propionyl-CoA carboxylase alpha chain, mitochondrial from Rattus norvegicus (Rat).